A 192-amino-acid polypeptide reads, in one-letter code: uncharacterized protein (192 aa).

The segment at 71 to 100 is disordered; it reads NNVLPEPSKPNNPVVNPPVSPIQPKTDPEQ. The segment covering 77-91 has biased composition (pro residues); sequence PSKPNNPVVNPPVSP.

This is an uncharacterized protein from Caenorhabditis elegans.